The chain runs to 320 residues: o-succinylbenzoate synthase (320 aa).

The active-site Proton donor is the Lys133. Mg(2+)-binding residues include Asp161, Glu190, and Asp213. Lys235 (proton acceptor) is an active-site residue.

Belongs to the mandelate racemase/muconate lactonizing enzyme family. MenC type 1 subfamily. Requires a divalent metal cation as cofactor.

It carries out the reaction (1R,6R)-6-hydroxy-2-succinyl-cyclohexa-2,4-diene-1-carboxylate = 2-succinylbenzoate + H2O. The protein operates within quinol/quinone metabolism; 1,4-dihydroxy-2-naphthoate biosynthesis; 1,4-dihydroxy-2-naphthoate from chorismate: step 4/7. Its pathway is quinol/quinone metabolism; menaquinone biosynthesis. Functionally, converts 2-succinyl-6-hydroxy-2,4-cyclohexadiene-1-carboxylate (SHCHC) to 2-succinylbenzoate (OSB). The sequence is that of o-succinylbenzoate synthase from Shigella boydii serotype 4 (strain Sb227).